Reading from the N-terminus, the 339-residue chain is Ferredoxin--NADP reductase (339 aa).

7 residues coordinate FAD: Asp32, Gln40, Tyr45, Val85, Phe120, Asp287, and Thr327.

Belongs to the ferredoxin--NADP reductase type 2 family. Homodimer. FAD is required as a cofactor.

It catalyses the reaction 2 reduced [2Fe-2S]-[ferredoxin] + NADP(+) + H(+) = 2 oxidized [2Fe-2S]-[ferredoxin] + NADPH. This is Ferredoxin--NADP reductase from Wolbachia sp. subsp. Brugia malayi (strain TRS).